The primary structure comprises 214 residues: Pyridoxine/pyridoxamine 5'-phosphate oxidase (214 aa).

Substrate is bound by residues 9-12 (RKDY) and Lys-67. Residues 62 to 67 (RMVLLK), 77 to 78 (FT), Arg-83, Lys-84, and Gln-106 contribute to the FMN site. Tyr-124, Arg-128, and Ser-132 together coordinate substrate. Residues 141-142 (QS) and Trp-186 contribute to the FMN site. Substrate is bound at residue 192-194 (RLH). Arg-196 contacts FMN.

The protein belongs to the pyridoxamine 5'-phosphate oxidase family. As to quaternary structure, homodimer. The cofactor is FMN.

The catalysed reaction is pyridoxamine 5'-phosphate + O2 + H2O = pyridoxal 5'-phosphate + H2O2 + NH4(+). It catalyses the reaction pyridoxine 5'-phosphate + O2 = pyridoxal 5'-phosphate + H2O2. It participates in cofactor metabolism; pyridoxal 5'-phosphate salvage; pyridoxal 5'-phosphate from pyridoxamine 5'-phosphate: step 1/1. It functions in the pathway cofactor metabolism; pyridoxal 5'-phosphate salvage; pyridoxal 5'-phosphate from pyridoxine 5'-phosphate: step 1/1. Catalyzes the oxidation of either pyridoxine 5'-phosphate (PNP) or pyridoxamine 5'-phosphate (PMP) into pyridoxal 5'-phosphate (PLP). This chain is Pyridoxine/pyridoxamine 5'-phosphate oxidase, found in Nostoc sp. (strain PCC 7120 / SAG 25.82 / UTEX 2576).